Reading from the N-terminus, the 437-residue chain is Acyl-coenzyme A thioesterase 9, mitochondrial (437 aa).

The N-terminal 21 residues, 1–21 (MRRAALRLCTLSKGLLAPSRG), are a transit peptide targeting the mitochondrion. 2 HotDog ACOT-type domains span residues 84–207 (SYIE…RDSE) and 287–399 (ENSK…EKEV). Position 101 is an N6-acetyllysine (Lys-101).

The protein belongs to the acyl coenzyme A hydrolase family. In terms of assembly, interacts with NYAP1, NYAP2 and MYO16.

Its subcellular location is the mitochondrion. It localises to the mitochondrion matrix. The protein localises to the mitochondrion inner membrane. It carries out the reaction butanoyl-CoA + H2O = butanoate + CoA + H(+). The enzyme catalyses propanoyl-CoA + H2O = propanoate + CoA + H(+). It catalyses the reaction hexadecanoyl-CoA + H2O = hexadecanoate + CoA + H(+). The catalysed reaction is octanoyl-CoA + H2O = octanoate + CoA + H(+). It carries out the reaction decanoyl-CoA + H2O = decanoate + CoA + H(+). The enzyme catalyses tetradecanoyl-CoA + H2O = tetradecanoate + CoA + H(+). It catalyses the reaction 4,8-dimethylnonanoyl-CoA + H2O = 4,8-dimethylnonanoate + CoA + H(+). The catalysed reaction is 3-methylbutanoyl-CoA + H2O = 3-methylbutanoate + CoA + H(+). It carries out the reaction 2-methylpropanoyl-CoA + H2O = 2-methylpropanoate + CoA + H(+). Its pathway is lipid metabolism; fatty acid metabolism. With respect to regulation, strongly inhibited by NADH and CoA. In terms of biological role, mitochondrial acyl-CoA thioesterase. Catalyzes the hydrolysis of acyl-CoAs into free fatty acids and coenzyme A (CoA), regulating their respective intracellular levels. Regulates both mitochondrial lipid and amino acid metabolism. This is Acyl-coenzyme A thioesterase 9, mitochondrial (ACOT9) from Bos taurus (Bovine).